A 153-amino-acid chain; its full sequence is Aspartate carbamoyltransferase regulatory chain (153 aa).

Residues cysteine 109, cysteine 114, cysteine 138, and cysteine 141 each contribute to the Zn(2+) site.

The protein belongs to the PyrI family. In terms of assembly, contains catalytic and regulatory chains. Zn(2+) serves as cofactor.

Functionally, involved in allosteric regulation of aspartate carbamoyltransferase. This is Aspartate carbamoyltransferase regulatory chain from Vibrio parahaemolyticus serotype O3:K6 (strain RIMD 2210633).